A 114-amino-acid chain; its full sequence is Large ribosomal subunit protein bL17 (114 aa).

This sequence belongs to the bacterial ribosomal protein bL17 family. Part of the 50S ribosomal subunit. Contacts protein L32.

The protein is Large ribosomal subunit protein bL17 of Elusimicrobium minutum (strain Pei191).